The primary structure comprises 433 residues: MEYKVEDVSPVKKKVNVTVPVEEVDAALGAAIAMYRTSVNLDGFRKGKVPASIVENRFRKEIYAEATQDLVNVHINEIVTSLEVSPLSRIDFDGGELERGKEFSYTISFEVMPQFDLPDYEGFAVEQEKAVVDEKEVDEVIARIRRNMAELVPVAETRPGADGDVVVLDFAAFENGEPIEGVSAENFQLSLGEKQSLEDFENLVKTIPAGQEAEGPITFPDDFLNPDFAGKTVTMKVKVHAVKERRLPEIDDALAQKAGGFESMEKMRETVVTSYMQSREQLHKATAQKSMLDKLLKMVDFALPESMVDMYVGNLIEDMRVKMERQGRGLESLGKTPEQLREQVLPEAQQIARSQIFLLAAGRKEAVEVSEQEVDGQLQQLAMRSGQDFDTLKDYYVRNGLIFNLRDRLIADKAMDAIYAKANVTMVDPAPAA.

The PPIase FKBP-type domain maps to 163 to 248; that stretch reads GDVVVLDFAA…VHAVKERRLP (86 aa).

It belongs to the FKBP-type PPIase family. Tig subfamily.

Its subcellular location is the cytoplasm. It catalyses the reaction [protein]-peptidylproline (omega=180) = [protein]-peptidylproline (omega=0). Functionally, involved in protein export. Acts as a chaperone by maintaining the newly synthesized protein in an open conformation. Functions as a peptidyl-prolyl cis-trans isomerase. In Nitratidesulfovibrio vulgaris (strain DP4) (Desulfovibrio vulgaris), this protein is Trigger factor.